The sequence spans 501 residues: Aldehyde dehydrogenase family 2 member C4 (501 aa).

245-250 (GSTDVG) contacts NAD(+). E268 functions as the Proton acceptor in the catalytic mechanism. C302 serves as the catalytic Nucleophile.

This sequence belongs to the aldehyde dehydrogenase family. In terms of assembly, homotetramer.

It is found in the cytoplasm. Its subcellular location is the cytosol. The enzyme catalyses an aldehyde + NAD(+) + H2O = a carboxylate + NADH + 2 H(+). In terms of biological role, involved in ferulic acid and sinapic acid biosynthesis by oxidation of conyferylaldehyde and sinapaldehyde, respectively. Can oxidize L-lactaldehyde. Possesses activity on acetaldehyde and glycolaldehyde in vitro. The chain is Aldehyde dehydrogenase family 2 member C4 (ALDH2C4) from Arabidopsis thaliana (Mouse-ear cress).